The sequence spans 578 residues: Proline--tRNA ligase (578 aa).

This sequence belongs to the class-II aminoacyl-tRNA synthetase family. ProS type 1 subfamily. Homodimer.

Its subcellular location is the cytoplasm. The catalysed reaction is tRNA(Pro) + L-proline + ATP = L-prolyl-tRNA(Pro) + AMP + diphosphate. Its function is as follows. Catalyzes the attachment of proline to tRNA(Pro) in a two-step reaction: proline is first activated by ATP to form Pro-AMP and then transferred to the acceptor end of tRNA(Pro). As ProRS can inadvertently accommodate and process non-cognate amino acids such as alanine and cysteine, to avoid such errors it has two additional distinct editing activities against alanine. One activity is designated as 'pretransfer' editing and involves the tRNA(Pro)-independent hydrolysis of activated Ala-AMP. The other activity is designated 'posttransfer' editing and involves deacylation of mischarged Ala-tRNA(Pro). The misacylated Cys-tRNA(Pro) is not edited by ProRS. This is Proline--tRNA ligase from Burkholderia orbicola (strain AU 1054).